Consider the following 488-residue polypeptide: MLKNKKLEFWFVVGSQNLYGEEALNAVKKDSKEIVDSLNESGKLPYPIVFKTLATSADEIKNIVKEINYRDEVAGVITWMHTFSPAKMWIAGTKLLQKPLLHLATQFNENIPWKTIDMDYMNLHQSAHGDREYGFINARLNKNNKVVVGYWKDNQVQKEIAEWMQVAYGYVASENIKVARFGDNMRNVAVTEGDKVEAQIQFGWTVDYFAIGDLVAEMNKVSQKDIDATYEEFKDIYILDIGDNDPEFYENHVKEQIKIEIGLRNFLEAGNYTAFTTNFEDLYGMKQLPGLAVQRLNAEGYGFAGEGDWKTAALNRLFKIMTDNKKTGFMEDYTYELSAGNERILGAHMLEVDPTLAASKPRVVVKPLGIGDKEAPARLIFDGVVGDGVVVSMLDLGTHYRLLINEVKAVKPTEDAPNLPVAKLVWQPQPNFKDAVKAWIYAGGGHHTVATLELTVEQVYDWSRMVGLETIVIDHNTNLRDIIKETSR.

Glutamate 306, glutamate 331, histidine 348, and histidine 447 together coordinate Mn(2+).

It belongs to the arabinose isomerase family. The cofactor is Mn(2+).

It carries out the reaction beta-L-arabinopyranose = L-ribulose. The protein operates within carbohydrate degradation; L-arabinose degradation via L-ribulose; D-xylulose 5-phosphate from L-arabinose (bacterial route): step 1/3. In terms of biological role, catalyzes the conversion of L-arabinose to L-ribulose. The protein is L-arabinose isomerase 1 of Clostridium acetobutylicum (strain ATCC 824 / DSM 792 / JCM 1419 / IAM 19013 / LMG 5710 / NBRC 13948 / NRRL B-527 / VKM B-1787 / 2291 / W).